A 558-amino-acid polypeptide reads, in one-letter code: Ribonuclease Y (558 aa).

A helical transmembrane segment spans residues 3 to 23 (VLSILLILVAVGVGIFVGRQF). One can recognise a KH domain in the interval 248-311 (TTTTVELPSN…EIAKEALQRL (64 aa)). One can recognise an HD domain in the interval 374–467 (VLLHSKEVAY…VCAADALSAA (94 aa)).

It belongs to the RNase Y family.

The protein localises to the cell membrane. In terms of biological role, endoribonuclease that initiates mRNA decay. The polypeptide is Ribonuclease Y (Aquifex aeolicus (strain VF5)).